We begin with the raw amino-acid sequence, 578 residues long: Proline--tRNA ligase (578 aa).

This sequence belongs to the class-II aminoacyl-tRNA synthetase family. ProS type 1 subfamily. Homodimer.

The protein resides in the cytoplasm. It carries out the reaction tRNA(Pro) + L-proline + ATP = L-prolyl-tRNA(Pro) + AMP + diphosphate. Functionally, catalyzes the attachment of proline to tRNA(Pro) in a two-step reaction: proline is first activated by ATP to form Pro-AMP and then transferred to the acceptor end of tRNA(Pro). As ProRS can inadvertently accommodate and process non-cognate amino acids such as alanine and cysteine, to avoid such errors it has two additional distinct editing activities against alanine. One activity is designated as 'pretransfer' editing and involves the tRNA(Pro)-independent hydrolysis of activated Ala-AMP. The other activity is designated 'posttransfer' editing and involves deacylation of mischarged Ala-tRNA(Pro). The misacylated Cys-tRNA(Pro) is not edited by ProRS. The sequence is that of Proline--tRNA ligase from Burkholderia ambifaria (strain ATCC BAA-244 / DSM 16087 / CCUG 44356 / LMG 19182 / AMMD) (Burkholderia cepacia (strain AMMD)).